We begin with the raw amino-acid sequence, 56 residues long: Conotoxin Cal6.41a (56 aa).

The first 23 residues, 1-23, serve as a signal peptide directing secretion; it reads MSGSGAMLLGLLILVAMATSLDT. 3 disulfides stabilise this stretch: cysteine 27–cysteine 41, cysteine 33–cysteine 50, and cysteine 40–cysteine 54.

In terms of tissue distribution, expressed by the venom duct.

It is found in the secreted. Its function is as follows. Probable neurotoxin. The protein is Conotoxin Cal6.41a of Californiconus californicus (California cone).